We begin with the raw amino-acid sequence, 445 residues long: Ubiquitin carboxyl-terminal hydrolase MINDY-3 (445 aa).

The Nucleophile role is filled by Cys51. Position 125 is a phosphoserine (Ser125). His287 acts as the Proton acceptor in catalysis.

The protein belongs to the MINDY deubiquitinase family. FAM188 subfamily. Interacts with COPS5.

It localises to the nucleus. The catalysed reaction is Thiol-dependent hydrolysis of ester, thioester, amide, peptide and isopeptide bonds formed by the C-terminal Gly of ubiquitin (a 76-residue protein attached to proteins as an intracellular targeting signal).. Hydrolase that can remove 'Lys-48'-linked conjugated ubiquitin from proteins. This is Ubiquitin carboxyl-terminal hydrolase MINDY-3 (MINDY3) from Bos taurus (Bovine).